The primary structure comprises 292 residues: Homeobox-leucine zipper protein HOX19 (292 aa).

Disordered stretches follow at residues 14–85 (LALG…HSVS), 99–133 (RERA…RLTK), and 217–236 (FAPP…PPAP). The span at 28-74 (TDAAAAHRGGCRRPSPSSQCPPLEPSLTLSLPDDAAAGAAATATATA) shows a compositional bias: low complexity. The segment covering 99–109 (RERAEEADGER) has biased composition (basic and acidic residues). The segment at residues 124-183 (STRKKLRLTKEQSALLEDRFREHSTLNPKQKVALAKQLNLRPRQVEVWFQNRRARTKLKQ) is a DNA-binding region (homeobox). Residues 182-226 (KQTEVDCEFLKRCCETLTEENRRLQRELQELRALKFAPPPPSSAA) form a leucine-zipper region.

It belongs to the HD-ZIP homeobox family. Class II subfamily. As to expression, expressed in seedlings, roots, stems, leaf sheaths and blades and panicles.

Its subcellular location is the nucleus. Probable transcription factor. The protein is Homeobox-leucine zipper protein HOX19 (HOX19) of Oryza sativa subsp. japonica (Rice).